The primary structure comprises 508 residues: Replication factor C large subunit (508 aa).

An ATP-binding site is contributed by 43 to 50 (GSPGIGKT). A disordered region spans residues 425 to 508 (AVEHSGGVFE…DQQSGLSDFM (84 aa)). Acidic residues-rich tracts occupy residues 443-461 (GDSDADGDAPDTDAGEESG) and 483-500 (TTDDETETASEAAEDDDQ).

Belongs to the activator 1 small subunits family. RfcL subfamily. As to quaternary structure, heteromultimer composed of small subunits (RfcS) and large subunits (RfcL).

In terms of biological role, part of the RFC clamp loader complex which loads the PCNA sliding clamp onto DNA. The protein is Replication factor C large subunit of Haloarcula marismortui (strain ATCC 43049 / DSM 3752 / JCM 8966 / VKM B-1809) (Halobacterium marismortui).